The chain runs to 458 residues: Argininosuccinate lyase (458 aa).

This sequence belongs to the lyase 1 family. Argininosuccinate lyase subfamily.

It is found in the cytoplasm. The enzyme catalyses 2-(N(omega)-L-arginino)succinate = fumarate + L-arginine. It participates in amino-acid biosynthesis; L-arginine biosynthesis; L-arginine from L-ornithine and carbamoyl phosphate: step 3/3. In Salmonella typhimurium (strain LT2 / SGSC1412 / ATCC 700720), this protein is Argininosuccinate lyase.